A 156-amino-acid chain; its full sequence is Small ribosomal subunit protein uS7 (156 aa).

It belongs to the universal ribosomal protein uS7 family. Part of the 30S ribosomal subunit. Contacts proteins S9 and S11.

Functionally, one of the primary rRNA binding proteins, it binds directly to 16S rRNA where it nucleates assembly of the head domain of the 30S subunit. Is located at the subunit interface close to the decoding center, probably blocks exit of the E-site tRNA. The chain is Small ribosomal subunit protein uS7 from Chromobacterium violaceum (strain ATCC 12472 / DSM 30191 / JCM 1249 / CCUG 213 / NBRC 12614 / NCIMB 9131 / NCTC 9757 / MK).